Here is a 629-residue protein sequence, read N- to C-terminus: tRNA uridine 5-carboxymethylaminomethyl modification enzyme MnmG (629 aa).

13–18 (GGGHAG) is a binding site for FAD. 273–287 (GPRYCPSIEDKIHRF) is a binding site for NAD(+).

It belongs to the MnmG family. Homodimer. Heterotetramer of two MnmE and two MnmG subunits. It depends on FAD as a cofactor.

Its subcellular location is the cytoplasm. Functionally, NAD-binding protein involved in the addition of a carboxymethylaminomethyl (cmnm) group at the wobble position (U34) of certain tRNAs, forming tRNA-cmnm(5)s(2)U34. In Shewanella amazonensis (strain ATCC BAA-1098 / SB2B), this protein is tRNA uridine 5-carboxymethylaminomethyl modification enzyme MnmG.